The sequence spans 375 residues: Chanoclavine-I aldehyde reductase ifgG (375 aa).

Residues 31–33, Ala-66, Gln-108, and His-176 each bind FMN; that span reads PTT. Substrate-binding residues include His-176 and Asn-179. Catalysis depends on Tyr-181, which acts as the Proton donor. Residues Lys-228, Gly-300, 325-326, and Arg-326 each bind FMN; that span reads GR. Tyr-353 contacts substrate.

The protein belongs to the NADH:flavin oxidoreductase/NADH oxidase family. It depends on FMN as a cofactor.

The enzyme catalyses dihydrochanoclavine-I aldehyde + NADP(+) = chanoclavine-I aldehyde + NADPH + H(+). It functions in the pathway alkaloid biosynthesis; ergot alkaloid biosynthesis. Its function is as follows. Chanoclavine-I aldehyde reductase; part of the gene cluster that mediates the biosynthesis of isofumigaclavines, fungal ergot alkaloids. The tryptophan dimethylallyltransferase ifgA catalyzes the first step of ergot alkaloid biosynthesis by condensing dimethylallyl diphosphate (DMAP) and tryptophan to form 4-dimethylallyl-L-tryptophan. The second step is catalyzed by the methyltransferase ifgB that methylates 4-dimethylallyl-L-tryptophan in the presence of S-adenosyl-L-methionine, resulting in the formation of N-methyl-dimethylallyl-L-tryptophan. The catalase ifgD and the FAD-dependent oxidoreductase ifgC then transform N-methyl-dimethylallyl-L-tryptophan to chanoclavine-I which is further oxidized by ifgE in the presence of NAD(+), resulting in the formation of chanoclavine-I aldehyde. The chanoclavine-I aldehyde reductases ifgG and/or fgaOx3 reduce chanoclavine-I aldehyde to dihydrochanoclavine-I aldehyde that spontaneously dehydrates to form 6,8-dimethyl-6,7-didehydroergoline. The festuclavine dehydrogenases ifgF1 and/or ifgF2 then catalyze the reduction of 6,8-dimethyl-6,7-didehydroergoline to form festuclavine. Hydrolysis of festuclavine by a yet undetermined cytochrome P450 monooxygenase (called ifgH) then leads to the formation of isofumigaclavine B which is in turn acetylated by ifgI to isofumigaclavine A. Penicillium roqueforti has interestingly at least two sets of genes for the consumption of chanoclavine-I aldehyde on three different loci, the OYEs ifgG/fgaOx3 and the festuclavine synthase homologs ifgF1/ifgF2. The reason for the duplication of these genes is unclear, probably to ensure the conversion of chanoclavine-I aldehyde by differential gene expression under various environmental conditions. This Penicillium roqueforti (strain FM164) protein is Chanoclavine-I aldehyde reductase ifgG.